Here is a 195-residue protein sequence, read N- to C-terminus: Cysteine/O-acetylserine efflux protein (195 aa).

Residues 1-9 lie on the Periplasmic side of the membrane; it reads MTPILLSAF. The helical transmembrane segment at 10 to 32 threads the bilayer; the sequence is WTYTLITAMTPGPNNILALSSAT. At 33 to 46 the chain is on the cytoplasmic side; that stretch reads SHGFRQSTRVLAGM. The chain crosses the membrane as a helical span at residues 47 to 67; it reads SLGFLIVMLLCAGISFSLAVI. Residues 68 to 69 are Periplasmic-facing; sequence DP. The helical transmembrane segment at 70–90 threads the bilayer; the sequence is AAVHLLSWAGAAYIVWLAWKI. Residues 91-104 are Cytoplasmic-facing; the sequence is ATSPTKEDGLQAKP. The helical transmembrane segment at 105 to 125 threads the bilayer; sequence ISFWASFALQFVNVKIILYGV. Residues 126 to 141 are Periplasmic-facing; that stretch reads TALSTFVLPQTQALSW. The chain crosses the membrane as a helical span at residues 142 to 162; that stretch reads VVGVSVLLAMIGTFGNVCWAL. Over 163-176 the chain is Cytoplasmic; that stretch reads AGHLFQRLFRQYGR. The helical transmembrane segment at 177–194 threads the bilayer; sequence QLNIVLALLLVYCAVRIF. A topological domain (periplasmic) is located at residue Tyr195.

The protein belongs to the Rht family.

Its subcellular location is the cell inner membrane. It catalyses the reaction O-acetyl-L-serine(in) = O-acetyl-L-serine(out). It carries out the reaction L-cysteine(in) = L-cysteine(out). In terms of biological role, exporter of O-acetylserine (OAS) and cysteine. The sequence is that of Cysteine/O-acetylserine efflux protein (eamB) from Shigella flexneri serotype 5b (strain 8401).